A 670-amino-acid polypeptide reads, in one-letter code: UvrABC system protein B (670 aa).

Residues 26–414 form the Helicase ATP-binding domain; that stretch reads EGLEDGLAHQ…GGDVIDQVVR (389 aa). Residue 39–46 coordinates ATP; that stretch reads GVTGSGKT. The short motif at 92–115 is the Beta-hairpin element; sequence YYDYYQPEAYVPSSDTFIEKDASV. Residues 431 to 597 form the Helicase C-terminal domain; sequence QVDDLLSEIR…GINKKISDIL (167 aa). Residues 630-665 enclose the UVR domain; it reads ELKIRELESKMLTHAQNLEFEEAAALRDEVQVLRAQ.

Belongs to the UvrB family. Forms a heterotetramer with UvrA during the search for lesions. Interacts with UvrC in an incision complex.

It is found in the cytoplasm. The UvrABC repair system catalyzes the recognition and processing of DNA lesions. A damage recognition complex composed of 2 UvrA and 2 UvrB subunits scans DNA for abnormalities. Upon binding of the UvrA(2)B(2) complex to a putative damaged site, the DNA wraps around one UvrB monomer. DNA wrap is dependent on ATP binding by UvrB and probably causes local melting of the DNA helix, facilitating insertion of UvrB beta-hairpin between the DNA strands. Then UvrB probes one DNA strand for the presence of a lesion. If a lesion is found the UvrA subunits dissociate and the UvrB-DNA preincision complex is formed. This complex is subsequently bound by UvrC and the second UvrB is released. If no lesion is found, the DNA wraps around the other UvrB subunit that will check the other stand for damage. The sequence is that of UvrABC system protein B from Pectobacterium atrosepticum (strain SCRI 1043 / ATCC BAA-672) (Erwinia carotovora subsp. atroseptica).